A 319-amino-acid polypeptide reads, in one-letter code: MQDQRNLLVFSGNANKPLAQSICKELGVRMGKALVTRFSDGEVQVEIEESVRRQEVFVIQPTCAPSAENLMELLVLIDALKRASAQSVTAVIPYFGYSRQDRRMRSSRVPITAKVAAKMICAMEADRVLTVDLHADQIQGFFDVPVDNVYASPLLLADIWRAYGTDNLIVVSPDVGGVVRARAVAKRLDDADLAIIDKRRPRANVATVMNIIGDVQGKTCVLVDDLVDTAGTLCAAAAALKQRGALKVVAYITHPVLSGPAVDNINNSQLDELVVTDTIPLSEAARTCAKIRQLSVAELLAETIRRIAFGESVSSLYVD.

Residues 40–42 (DGE) and 99–100 (RQ) each bind ATP. Mg(2+) is bound by residues His-134 and Asp-174. Residue Lys-198 is part of the active site. Residues Arg-200, Asp-224, and 228–232 (DTAGT) contribute to the D-ribose 5-phosphate site.

Belongs to the ribose-phosphate pyrophosphokinase family. Class I subfamily. As to quaternary structure, homohexamer. It depends on Mg(2+) as a cofactor.

The protein localises to the cytoplasm. It carries out the reaction D-ribose 5-phosphate + ATP = 5-phospho-alpha-D-ribose 1-diphosphate + AMP + H(+). It participates in metabolic intermediate biosynthesis; 5-phospho-alpha-D-ribose 1-diphosphate biosynthesis; 5-phospho-alpha-D-ribose 1-diphosphate from D-ribose 5-phosphate (route I): step 1/1. In terms of biological role, involved in the biosynthesis of the central metabolite phospho-alpha-D-ribosyl-1-pyrophosphate (PRPP) via the transfer of pyrophosphoryl group from ATP to 1-hydroxyl of ribose-5-phosphate (Rib-5-P). This chain is Ribose-phosphate pyrophosphokinase, found in Xanthomonas axonopodis pv. citri (strain 306).